The sequence spans 219 residues: Ras-like protein 1 (219 aa).

Position 15 to 22 (15 to 22 (GDGGVGKS)) interacts with GTP. Positions 37-45 (YDPTIEDSY) match the Effector region motif. Residues 62-66 (DTAGQ) and 121-124 (NKCD) contribute to the GTP site. Cys216 is modified (cysteine methyl ester). Cys216 carries the S-farnesyl cysteine lipid modification. A propeptide spans 217-219 (VIC) (removed in mature form).

It belongs to the small GTPase superfamily. Ras family. In terms of assembly, scd1, scd2, cdc42, and ras1, in its GTP-bound state, act cooperatively to form a protein complex. Palmitoylated by the erf2-erf4 complex.

The protein localises to the cell membrane. It catalyses the reaction GTP + H2O = GDP + phosphate + H(+). With respect to regulation, alternates between an inactive form bound to GDP and an active form bound to GTP. Activated by a guanine nucleotide-exchange factor (GEF) and inactivated by a GTPase-activating protein (GAP). Its function is as follows. Participates in the process of sexual differentiation and the determination of cell shape. Essential for mating and for recognition of the mating pheromone, but not for vegetative growth. Does not regulate the intracellular cAMP level. Regulates two downstream pathways, namely the byr2/byr1/spk1 mitogen-activated protein kinase cascade and the cdc42 small G protein pathway. The former is relevant to mating and sporulation, whereas the latter is relevant to mating, cell growth and cell morphology. The protein is Ras-like protein 1 (ras1) of Schizosaccharomyces pombe (strain 972 / ATCC 24843) (Fission yeast).